The primary structure comprises 101 residues: Ascorbate-specific PTS system EIIB component (101 aa).

One can recognise a PTS EIIB type-2 domain in the interval 3–96 (VRILAVCGNG…KLLKVIKEHF (94 aa)). Cysteine 9 (phosphocysteine intermediate) is an active-site residue. Cysteine 9 is modified (phosphocysteine).

The protein resides in the cytoplasm. It carries out the reaction N(pros)-phospho-L-histidyl-[protein] + L-ascorbate(out) = L-ascorbate 6-phosphate(in) + L-histidyl-[protein]. Functionally, the phosphoenolpyruvate-dependent sugar phosphotransferase system (sugar PTS), a major carbohydrate active transport system, catalyzes the phosphorylation of incoming sugar substrates concomitantly with their translocation across the cell membrane. The enzyme II UlaABC PTS system is involved in ascorbate transport. This chain is Ascorbate-specific PTS system EIIB component (ulaB), found in Shigella dysenteriae serotype 1 (strain Sd197).